Here is a 232-residue protein sequence, read N- to C-terminus: U2 small nuclear ribonucleoprotein B'' (232 aa).

Positions 10–89 (QTVYLRNLNE…KRMRVQYAKT (80 aa)) constitute an RRM 1 domain. The disordered stretch occupies residues 92 to 159 (DCLATEDGST…QEPPAPPNNI (68 aa)). Residues 108 to 123 (KKQEEKAAEKKRRAEE) are compositionally biased toward basic and acidic residues. The span at 127–151 (SGPNAAAQSNGTGYQASRLGKTSQE) shows a compositional bias: polar residues. The region spanning 158–232 (NILFIQNLPA…NPMAISYAKK (75 aa)) is the RRM 2 domain.

The protein belongs to the RRM U1 A/B'' family. As to quaternary structure, component of the spliceosome where it is associated with snRNP U2.

It is found in the nucleus. It localises to the cajal body. The protein localises to the nucleoplasm. The protein resides in the cytoplasm. Its function is as follows. Involved in nuclear pre-mRNA splicing. This is U2 small nuclear ribonucleoprotein B'' from Oryza sativa subsp. indica (Rice).